The primary structure comprises 406 residues: Cytochrome bc1 complex Rieske iron-sulfur subunit (406 aa).

Helical transmembrane passes span 56 to 76 (VGIWFGIGIVSALAFLAVYLF), 98 to 118 (LLGLTSGLAILSLGIGVIFYI), and 166 to 186 (MLGIGGVLAGLTIIAPLGGMV). Residues 291 to 388 (HGPRNAVMLI…ITVDEEGYLV (98 aa)) form the Rieske domain. Residues C331, H333, C350, and H353 each coordinate [2Fe-2S] cluster. C336 and C352 are joined by a disulfide.

It belongs to the Rieske iron-sulfur protein family. The cytochrome bc1 complex is composed of a cytochrome b (QcrB), the Rieske iron-sulfur protein (QcrA) and a diheme cytochrome c (QcrC) subunit. The bc1 complex forms a supercomplex with cytochrome c oxidase (cytochrome aa3). The cofactor is [2Fe-2S] cluster.

It localises to the cell membrane. Iron-sulfur subunit of the cytochrome bc1 complex, an essential component of the respiratory electron transport chain required for ATP synthesis. The bc1 complex catalyzes the oxidation of menaquinol and the reduction of cytochrome c in the respiratory chain. The bc1 complex operates through a Q-cycle mechanism that couples electron transfer to generation of the proton gradient that drives ATP synthesis. The protein is Cytochrome bc1 complex Rieske iron-sulfur subunit (qcrA) of Corynebacterium diphtheriae (strain ATCC 700971 / NCTC 13129 / Biotype gravis).